Here is a 239-residue protein sequence, read N- to C-terminus: Phosphoglycolate phosphatase (239 aa).

Asp-9 (nucleophile) is an active-site residue. Mg(2+)-binding residues include Asp-9 and Asp-11. Position 157 (Lys-157) interacts with substrate. Asp-180 and Asp-184 together coordinate Mg(2+).

Belongs to the archaeal SPP-like hydrolase family. The cofactor is Mg(2+).

The enzyme catalyses 2-phosphoglycolate + H2O = glycolate + phosphate. In terms of biological role, catalyzes the dephosphorylation of 2-phosphoglycolate. This is Phosphoglycolate phosphatase from Thermococcus kodakarensis (strain ATCC BAA-918 / JCM 12380 / KOD1) (Pyrococcus kodakaraensis (strain KOD1)).